A 356-amino-acid polypeptide reads, in one-letter code: MSRLQNDTFLRALLRQPTDYTPLWMMRQAGRYLPEYCETRRRAGSFLDLCKSPALACEVTLQPLARYDLDAAILFSDILTVPDAMGLGLYFAEGEGPRFERPLRDEWEIRNLVAPDPHAELQYVMDAVAEIRRALGGSVPLIGFSGSPWTLACYMVEGGSSDDYRRIKTMAYTRPDLLHHVLRVTADSVVAYLNAQIESGAQAVMVFDSWGGVLSEAAYREFSLPYLERVVAGLIRERDGERIPSIVFTKGGGLWLESIAAIGCDAVGLDWTMDIGRARALVGDKVALQGNLDPAILFAPPETIATEAKRVLDAFGPHPGHVFNLGHGISQFTPPEAVSVLVDTVHQHSRKLRGGR.

Residues 27 to 31 (RQAGR), Asp77, Tyr154, Ser209, and His327 each bind substrate.

Belongs to the uroporphyrinogen decarboxylase family. In terms of assembly, homodimer.

The protein resides in the cytoplasm. It catalyses the reaction uroporphyrinogen III + 4 H(+) = coproporphyrinogen III + 4 CO2. Its pathway is porphyrin-containing compound metabolism; protoporphyrin-IX biosynthesis; coproporphyrinogen-III from 5-aminolevulinate: step 4/4. Catalyzes the decarboxylation of four acetate groups of uroporphyrinogen-III to yield coproporphyrinogen-III. This chain is Uroporphyrinogen decarboxylase, found in Aromatoleum aromaticum (strain DSM 19018 / LMG 30748 / EbN1) (Azoarcus sp. (strain EbN1)).